Reading from the N-terminus, the 348-residue chain is Centromere protein N-A (348 aa).

The protein belongs to the CENP-N/CHL4 family.

Its subcellular location is the nucleus. The protein resides in the chromosome. It is found in the centromere. Probable component of a centromeric complex involved in assembly of kinetochore proteins, mitotic progression and chromosome segregation. The protein is Centromere protein N-A (cenpn-a) of Xenopus laevis (African clawed frog).